The primary structure comprises 69 residues: Putative membrane protein insertion efficiency factor (69 aa).

This sequence belongs to the UPF0161 family.

It is found in the cell inner membrane. Functionally, could be involved in insertion of integral membrane proteins into the membrane. The chain is Putative membrane protein insertion efficiency factor from Geobacter metallireducens (strain ATCC 53774 / DSM 7210 / GS-15).